Reading from the N-terminus, the 664-residue chain is DNA ligase (664 aa).

Residues 32 to 36 (DKEYD) and 80 to 81 (SL) contribute to the NAD(+) site. The active-site N6-AMP-lysine intermediate is lysine 122. NAD(+) contacts are provided by arginine 144, glutamate 178, and lysine 314. Positions 407, 410, 423, and 429 each coordinate Zn(2+). Positions 587 to 664 (IDENPFMDKT…NEEEFSNKIK (78 aa)) constitute a BRCT domain.

It belongs to the NAD-dependent DNA ligase family. LigA subfamily. Requires Mg(2+) as cofactor. The cofactor is Mn(2+).

It carries out the reaction NAD(+) + (deoxyribonucleotide)n-3'-hydroxyl + 5'-phospho-(deoxyribonucleotide)m = (deoxyribonucleotide)n+m + AMP + beta-nicotinamide D-nucleotide.. Functionally, DNA ligase that catalyzes the formation of phosphodiester linkages between 5'-phosphoryl and 3'-hydroxyl groups in double-stranded DNA using NAD as a coenzyme and as the energy source for the reaction. It is essential for DNA replication and repair of damaged DNA. This chain is DNA ligase, found in Clostridium botulinum (strain Loch Maree / Type A3).